Reading from the N-terminus, the 290-residue chain is Small ribosomal subunit biogenesis GTPase RsgA (290 aa).

Positions 62–219 constitute a CP-type G domain; the sequence is DNYLIRPQVA…VVDTPGFSTL (158 aa). GTP contacts are provided by residues 111 to 114 and 162 to 170; these read NKID and GPSGVGKST. C243, C248, H250, and C256 together coordinate Zn(2+).

This sequence belongs to the TRAFAC class YlqF/YawG GTPase family. RsgA subfamily. Monomer. Associates with 30S ribosomal subunit, binds 16S rRNA. The cofactor is Zn(2+).

Its subcellular location is the cytoplasm. One of several proteins that assist in the late maturation steps of the functional core of the 30S ribosomal subunit. Helps release RbfA from mature subunits. May play a role in the assembly of ribosomal proteins into the subunit. Circularly permuted GTPase that catalyzes slow GTP hydrolysis, GTPase activity is stimulated by the 30S ribosomal subunit. The polypeptide is Small ribosomal subunit biogenesis GTPase RsgA (Clostridium novyi (strain NT)).